The following is a 369-amino-acid chain: MANLEVNPQRYQEQLAEKTERLTEMFSEYNVPELEVYESPEQHYRMRAEFRVWHEGDDMYYVMFNQETKEKYRVDQFPAASRLINDLMPLLTDAMKDNHSLRHKLFQVDFLSTLSGEILVSLLYHRQLGEQWIQDAKALKQQLNDEGFNLNLIGRARKMKIVLDRDYVIEKLDVNGDSYIYQQVENSFTQPNGKVAEKMLEWAVDCTQDSKGDLLELYCGNGNFSLALAQNFERVLATELAKPSVESAQYNIAANKIENVQIIRMSAEDFTVAMEGKREFRRLQQANIDLKSYNCNTIFVDPPRSGMDVDTCKMVQGYERIMYISCNPETLKENLDILSETHDITRFALFDQFPYTHHMEAGVFLERKA.

The S-adenosyl-L-methionine site is built by Q190, Y218, N223, E239, and D301. C326 acts as the Nucleophile in catalysis. E360 functions as the Proton acceptor in the catalytic mechanism.

It belongs to the class I-like SAM-binding methyltransferase superfamily. RNA M5U methyltransferase family. TrmA subfamily.

The enzyme catalyses uridine(54) in tRNA + S-adenosyl-L-methionine = 5-methyluridine(54) in tRNA + S-adenosyl-L-homocysteine + H(+). It carries out the reaction uridine(341) in tmRNA + S-adenosyl-L-methionine = 5-methyluridine(341) in tmRNA + S-adenosyl-L-homocysteine + H(+). In terms of biological role, dual-specificity methyltransferase that catalyzes the formation of 5-methyluridine at position 54 (m5U54) in all tRNAs, and that of position 341 (m5U341) in tmRNA (transfer-mRNA). This is tRNA/tmRNA (uracil-C(5))-methyltransferase from Vibrio atlanticus (strain LGP32) (Vibrio splendidus (strain Mel32)).